The chain runs to 349 residues: UDP-N-acetylenolpyruvoylglucosamine reductase (349 aa).

The region spanning 26–197 is the FAD-binding PCMH-type domain; that stretch reads FDARARVAAR…VAVTFRLPKA (172 aa). Arg173 is a catalytic residue. The Proton donor role is filled by Ser249. Glu345 is a catalytic residue.

The protein belongs to the MurB family. FAD is required as a cofactor.

Its subcellular location is the cytoplasm. It carries out the reaction UDP-N-acetyl-alpha-D-muramate + NADP(+) = UDP-N-acetyl-3-O-(1-carboxyvinyl)-alpha-D-glucosamine + NADPH + H(+). It functions in the pathway cell wall biogenesis; peptidoglycan biosynthesis. In terms of biological role, cell wall formation. This is UDP-N-acetylenolpyruvoylglucosamine reductase from Burkholderia pseudomallei (strain K96243).